Consider the following 349-residue polypeptide: Aldehyde reductase YahK (349 aa).

Cys-40, His-62, Cys-93, Cys-96, Cys-99, Cys-107, and Cys-158 together coordinate Zn(2+).

It belongs to the zinc-containing alcohol dehydrogenase family. Zn(2+) serves as cofactor.

The enzyme catalyses a primary alcohol + NADP(+) = an aldehyde + NADPH + H(+). Its function is as follows. Catalyzes the reduction of a wide range of aldehydes into their corresponding alcohols. Has a strong preference for NADPH over NADH as the electron donor. Cannot use a ketone as substrate. Is a major source of NADPH-dependent aldehyde reductase activity in E.coli. The in vivo functions of YahK has yet to be determined. In Escherichia coli (strain K12), this protein is Aldehyde reductase YahK (yahK).